The following is a 548-amino-acid chain: Sesquiterpene synthase 9 (548 aa).

The Mg(2+) site is built by Asp300, Asp304, and Glu453. A DDXXD motif motif is present at residues 300–304; it reads DDTFD.

Belongs to the terpene synthase family. Tpsa subfamily. Mg(2+) serves as cofactor. Requires Mn(2+) as cofactor. In terms of tissue distribution, mostly expressed in stem and trichomes, to a lower extent in roots, leaves and flowers and, at low levels, in fruits.

The protein resides in the cytoplasm. It carries out the reaction (2E,6E)-farnesyl diphosphate = germacrene C + diphosphate. The enzyme catalyses (2E)-geranyl diphosphate = terpinolene + diphosphate. It catalyses the reaction (2E)-geranyl diphosphate = limonene + diphosphate. The catalysed reaction is (2E)-geranyl diphosphate = beta-myrcene + diphosphate. It carries out the reaction (2Z,6Z)-farnesyl diphosphate = germacrene C + diphosphate. Its pathway is secondary metabolite biosynthesis; terpenoid biosynthesis. Functionally, involved in the biosynthesis of germacrene C, one of the most abundant sesquiterpene in the leaf oil of tomato. Produces mainly germacrene C, but also smaller amounts of germacrene A, B and D when used with farnesyl diphosphate (FPP) as substrate; able to use both (2E,6E)-farnesyl diphosphate ((EE)-FPP) and (2Z,6Z)-farnesyl diphosphate ((ZZ)-FPP). No or low activity with geranylgeranyl diphosphate (GGPP). Can act with a low efficiency as a monoterpene synthase with geranyl diphosphate (GPP) as substrate, thus producing beta-myrcene, limonene and terpinolene. This is Sesquiterpene synthase 9 from Solanum lycopersicum (Tomato).